The following is a 296-amino-acid chain: Giardin subunit alpha-3 (296 aa).

Annexin repeat units lie at residues 3–72 (DTVT…SNCW), 74–146 (ELPV…TWIK), 153–222 (NNIN…TAHY), and 226–295 (GMNN…VLWR).

Belongs to the annexin family. Giardin subunit alpha subfamily.

Its subcellular location is the cytoplasm. It is found in the cytoskeleton. In terms of biological role, giardins are involved in parasite attachment to the intestinal mucosa and in the cytoskeletal disassembly and reassembly that marks the transition from infectious trophozoite to transmissible cyst. They may interact with other cytoskeletal proteins such as microtubules in the microribbons or crossbridges, to maintain the integrity of the ventral disk. This is Giardin subunit alpha-3 from Giardia intestinalis (Giardia lamblia).